A 148-amino-acid chain; its full sequence is Putative nickel-responsive regulator (148 aa).

Ni(2+) is bound by residues His-88, His-99, His-101, and Cys-107.

It belongs to the transcriptional regulatory CopG/NikR family. Homotetramer. Requires Ni(2+) as cofactor.

Its function is as follows. Transcriptional regulator. This is Putative nickel-responsive regulator from Helicobacter pylori (strain ATCC 700392 / 26695) (Campylobacter pylori).